A 509-amino-acid polypeptide reads, in one-letter code: T-complex protein 11-like protein 1 (509 aa).

Basic and acidic residues predominate over residues 1–12; it reads MSENLDKSHVDE. Residues 1–57 are disordered; sequence MSENLDKSHVDEAGEAEAAASEQGLEGALECSDETLQKKVKSDSPSSQRVGRPHSSP. The span at 16–30 shows a compositional bias: low complexity; sequence AEAAASEQGLEGALE. Ser56 carries the phosphoserine modification.

The protein belongs to the TCP11 family.

This Mus musculus (Mouse) protein is T-complex protein 11-like protein 1 (Tcp11l1).